Here is a 136-residue protein sequence, read N- to C-terminus: S-protein homolog 17 (136 aa).

The N-terminal stretch at M1–A22 is a signal peptide.

Belongs to the plant self-incompatibility (S1) protein family.

The protein resides in the secreted. The sequence is that of S-protein homolog 17 from Arabidopsis thaliana (Mouse-ear cress).